Here is a 402-residue protein sequence, read N- to C-terminus: CinA-like protein (402 aa).

It belongs to the CinA family.

The sequence is that of CinA-like protein from Deinococcus deserti (strain DSM 17065 / CIP 109153 / LMG 22923 / VCD115).